A 272-amino-acid polypeptide reads, in one-letter code: 1,4-dihydroxy-6-naphtoate synthase (272 aa).

Residues 55–57 (KLS) and 107–108 (TA) contribute to the substrate site. The active-site Proton acceptor is His145.

It belongs to the MqnA/MqnD family. MqnD subfamily.

The enzyme catalyses cyclic dehypoxanthinylfutalosinate = 1,4-dihydroxy-6-naphthoate + dihydroxyacetone. The protein operates within quinol/quinone metabolism; menaquinone biosynthesis. Catalyzes the conversion of cyclic dehypoxanthine futalosine (cyclic DHFL) into 1,4-dihydroxy-6-naphthoate, a step in the biosynthesis of menaquinone (MK, vitamin K2). This is 1,4-dihydroxy-6-naphtoate synthase from Thermus thermophilus (strain ATCC 27634 / DSM 579 / HB8).